The following is a 345-amino-acid chain: MESTLGLEIIEVVEQAAIASAKWMGKGEKNTADQVAVEAMRERMNQIHMRGRIVIGEGERDDAPMLYIGEEVGICTREDAKAYCNPEELIEIDIAVDPCEGTNLVAYGQNGSMAVLAISEKGGLFAAPDFYMKKLAAPPAAKGKVDINKSATENLKILGECLERTVEELVVVVMDRPRHKELIQEIRDAGARVRLISDGDVSAAISCGFAGTNIHALMGIGAAPEGVISAAAMRCLGGHFQGQLIYDPEVVKTGLIGESREGNIARLKEMGIDDPDRVYTDSELASGETVLFAACGITPGTLMEGVRFFHGGARTQSLVISSQSKTARFVDTIHIQEQPKYIELK.

Mn(2+)-binding residues include Asp33, Glu57, Asp97, and Glu100. Residues 100–102, Tyr131, 176–178, and 198–200 each bind substrate; these read EGT, RPR, and DGD. Residue Glu225 coordinates Mn(2+).

The protein belongs to the FBPase class 2 family. Homotetramer. The cofactor is Mn(2+).

The catalysed reaction is beta-D-fructose 1,6-bisphosphate + H2O = beta-D-fructose 6-phosphate + phosphate. It catalyses the reaction D-sedoheptulose 1,7-bisphosphate + H2O = D-sedoheptulose 7-phosphate + phosphate. It functions in the pathway carbohydrate biosynthesis; Calvin cycle. In terms of biological role, catalyzes the hydrolysis of fructose 1,6-bisphosphate (Fru 1,6-P2) and sedoheptulose 1,7-bisphosphate (Sed 1,7-P2) to fructose 6-phosphate and sedoheptulose 7-phosphate, respectively. This chain is D-fructose 1,6-bisphosphatase class 2/sedoheptulose 1,7-bisphosphatase, found in Crocosphaera subtropica (strain ATCC 51142 / BH68) (Cyanothece sp. (strain ATCC 51142)).